Consider the following 190-residue polypeptide: NADH-dependent phenylglyoxylate dehydrogenase subunit gamma (190 aa).

Dimer of heteropentamers composed of an alpha (PadG), a beta (PadI), a gamma (PadE), a delta (PadF) and an epsilon (PadH) subunit.

The catalysed reaction is phenylglyoxylate + NAD(+) + CoA = benzoyl-CoA + CO2 + NADH. Its activity is regulated as follows. Activated by magnesium ions and thiamine diphosphate. Its function is as follows. Involved in the anaerobic metabolism of phenylalanine and phenylacetate. Catalyzes the oxidative decarboxylation of phenylglyoxylate to benzoyl-CoA and CO(2). It can also react slowly with 2-oxo-3-methylbutanoate and use different electron acceptors such as benzyl viologen, methyl viologen, FAD or FMN, but NAD seems to be the physiological electron acceptor. Also catalyzes an isotope exchange between CO(2) and the carboxyl group which proves partial or complete reversibility of the oxidative decarboxylation reaction. The polypeptide is NADH-dependent phenylglyoxylate dehydrogenase subunit gamma (padE) (Aromatoleum evansii (Azoarcus evansii)).